Reading from the N-terminus, the 388-residue chain is Tryptophan synthase beta chain 1 (388 aa).

Residue lysine 82 is modified to N6-(pyridoxal phosphate)lysine.

The protein belongs to the TrpB family. As to quaternary structure, tetramer of two alpha and two beta chains. It depends on pyridoxal 5'-phosphate as a cofactor.

It carries out the reaction (1S,2R)-1-C-(indol-3-yl)glycerol 3-phosphate + L-serine = D-glyceraldehyde 3-phosphate + L-tryptophan + H2O. The protein operates within amino-acid biosynthesis; L-tryptophan biosynthesis; L-tryptophan from chorismate: step 5/5. The beta subunit is responsible for the synthesis of L-tryptophan from indole and L-serine. This chain is Tryptophan synthase beta chain 1 (trpB1), found in Pyrococcus abyssi (strain GE5 / Orsay).